Consider the following 487-residue polypeptide: MSELFIGGEWAAGTGPAFASRNPGTGAAVWEGNSASADDVDRAVRSARRAFAAWSASSVDERCAVVRRFAALVTERKEALAEAIGRETGKPLWEARTEAASMAAKVEISIQAYNERTGEKRSAMADGTAVLRHRPHGVVAVFGPYNFPGHLPNGHIVPALIAGNAVVFKPSELAPGVAALTVQIWRDAGLPAGVLNLVQGEKDTGIALANHRQIDGLFFTGSSDTGTLLHKQFGGRPEIVLALEMGGNNPLVIGPVADVDAAVHHTIQSAFLSAGQRCTCARRIFVPNDAAGDRFLERFTEVTSRITVGEYNADPQPFMGAVISVRAASRLVAAQERLLADGAKALLKMEQRDPKLGFVTPAILDVTNVANRPDEEHFGPLAQIIRYGSFNEALEQANDTEFGLSAGLLADDEALWAHFQRTIRAGIVNWNRPTNGASSGAPFGGPGRSGNHRPSAYYAADYCAFPMASVESAQLQMPASVSPGLQF.

Position 221–226 (221–226 (GSSDTG)) interacts with NAD(+). Residues glutamate 244 and cysteine 278 contribute to the active site.

It belongs to the aldehyde dehydrogenase family. AstD subfamily.

It catalyses the reaction N-succinyl-L-glutamate 5-semialdehyde + NAD(+) + H2O = N-succinyl-L-glutamate + NADH + 2 H(+). It functions in the pathway amino-acid degradation; L-arginine degradation via AST pathway; L-glutamate and succinate from L-arginine: step 4/5. Its function is as follows. Catalyzes the NAD-dependent reduction of succinylglutamate semialdehyde into succinylglutamate. This Paraburkholderia xenovorans (strain LB400) protein is N-succinylglutamate 5-semialdehyde dehydrogenase.